A 375-amino-acid polypeptide reads, in one-letter code: 2-oxoglutarate synthase subunit KorA (375 aa).

Heterotetramer of the KorA, KorB, KorC and KorD subunits.

The enzyme catalyses 2 oxidized [2Fe-2S]-[ferredoxin] + 2-oxoglutarate + CoA = succinyl-CoA + 2 reduced [2Fe-2S]-[ferredoxin] + CO2 + H(+). This is 2-oxoglutarate synthase subunit KorA (korA) from Methanothermobacter marburgensis (strain ATCC BAA-927 / DSM 2133 / JCM 14651 / NBRC 100331 / OCM 82 / Marburg) (Methanobacterium thermoautotrophicum).